The following is a 351-amino-acid chain: Probable RNA methyltransferase BAV1540 (351 aa).

Catalysis depends on Glu-90, which acts as the Proton acceptor. Residues 93–319 (LLPRDGLCVS…VKVRNSAGQD (227 aa)) enclose the Radical SAM core domain. Cys-100 and Cys-324 form a disulfide bridge. Residues Cys-107, Cys-111, and Cys-114 each contribute to the [4Fe-4S] cluster site. Residues 152–153 (GE), Ser-182, 205–207 (SLH), and Asn-281 contribute to the S-adenosyl-L-methionine site. Cys-324 serves as the catalytic S-methylcysteine intermediate.

This sequence belongs to the radical SAM superfamily. RlmN family. [4Fe-4S] cluster is required as a cofactor.

It localises to the cytoplasm. The polypeptide is Probable RNA methyltransferase BAV1540 (Bordetella avium (strain 197N)).